Here is a 423-residue protein sequence, read N- to C-terminus: MSQRSSELFERAQQLIPGGVNSPVRACLGVDSEPLFIARAAGSRLHTVDGETFIDFVESWGPMLLGHTHPEVTAAVHAAVDRGTSYGAPCEDEVVLAAKVVDALPGVDMVRMVNSGTEATMSALRLARGYTGRTKLVKFVGCYHGHADPFLASAGSGVATLSIPGTPGVPESTVRDTLLAPYNDLAAVKDLFALHGKDIAAIIVEAVAGNMGLVPPKAGFLEGLRELCDQHGALLIFDEVITGFRVSFGGAQQRFGITPDLTTLGKIIGGGLPVGAYGGKREIMQRIAPCGEVYQAGTLSGNPLAMAAGIATLDVLSRSDYAGLEARVSAFVKELEAILKGKGVPVRINTLASMFTVFFTNDPVTDFASAKTADGALYTSFYKQMRAQGIYLAPSPFEAAMVSFAHTDDDLAAMLDAARKVTF.

Lys266 is subject to N6-(pyridoxal phosphate)lysine.

It belongs to the class-III pyridoxal-phosphate-dependent aminotransferase family. HemL subfamily. As to quaternary structure, homodimer. Pyridoxal 5'-phosphate serves as cofactor.

The protein resides in the cytoplasm. It catalyses the reaction (S)-4-amino-5-oxopentanoate = 5-aminolevulinate. It functions in the pathway porphyrin-containing compound metabolism; protoporphyrin-IX biosynthesis; 5-aminolevulinate from L-glutamyl-tRNA(Glu): step 2/2. The chain is Glutamate-1-semialdehyde 2,1-aminomutase from Nitratidesulfovibrio vulgaris (strain DP4) (Desulfovibrio vulgaris).